Reading from the N-terminus, the 478-residue chain is Adenosylhomocysteinase (478 aa).

Substrate is bound by residues threonine 57, aspartate 139, and glutamate 201. 202–204 (TTT) is an NAD(+) binding site. Residues lysine 231 and aspartate 235 each contribute to the substrate site. NAD(+) is bound by residues asparagine 236, 265 to 270 (GYGDVG), glutamate 288, asparagine 323, 344 to 346 (IGH), and asparagine 392.

This sequence belongs to the adenosylhomocysteinase family. Requires NAD(+) as cofactor.

The protein resides in the cytoplasm. The catalysed reaction is S-adenosyl-L-homocysteine + H2O = L-homocysteine + adenosine. It participates in amino-acid biosynthesis; L-homocysteine biosynthesis; L-homocysteine from S-adenosyl-L-homocysteine: step 1/1. Functionally, may play a key role in the regulation of the intracellular concentration of adenosylhomocysteine. This Corynebacterium efficiens (strain DSM 44549 / YS-314 / AJ 12310 / JCM 11189 / NBRC 100395) protein is Adenosylhomocysteinase.